A 103-amino-acid chain; its full sequence is Defensin-like protein 268 (103 aa).

Positions M1 to A24 are cleaved as a signal peptide. 4 disulfide bridges follow: C44/C103, C68/C87, C74/C98, and C78/C100.

The protein belongs to the DEFL family.

It is found in the secreted. This is Defensin-like protein 268 from Arabidopsis thaliana (Mouse-ear cress).